Here is a 222-residue protein sequence, read N- to C-terminus: Probable nicotinate-nucleotide adenylyltransferase (222 aa).

The protein belongs to the NadD family.

It catalyses the reaction nicotinate beta-D-ribonucleotide + ATP + H(+) = deamido-NAD(+) + diphosphate. It functions in the pathway cofactor biosynthesis; NAD(+) biosynthesis; deamido-NAD(+) from nicotinate D-ribonucleotide: step 1/1. Catalyzes the reversible adenylation of nicotinate mononucleotide (NaMN) to nicotinic acid adenine dinucleotide (NaAD). This Pseudomonas syringae pv. tomato (strain ATCC BAA-871 / DC3000) protein is Probable nicotinate-nucleotide adenylyltransferase.